The sequence spans 642 residues: Threonine--tRNA ligase (642 aa).

The region spanning 1-61 (MPVITLPDGS…ETDSTLSIIT (61 aa)) is the TGS domain. The tract at residues 243–534 (DHRKIGKQLD…LTEEFAGFFP (292 aa)) is catalytic. The Zn(2+) site is built by Cys334, His385, and His511.

The protein belongs to the class-II aminoacyl-tRNA synthetase family. In terms of assembly, homodimer. Zn(2+) is required as a cofactor.

Its subcellular location is the cytoplasm. The enzyme catalyses tRNA(Thr) + L-threonine + ATP = L-threonyl-tRNA(Thr) + AMP + diphosphate + H(+). Its function is as follows. Catalyzes the attachment of threonine to tRNA(Thr) in a two-step reaction: L-threonine is first activated by ATP to form Thr-AMP and then transferred to the acceptor end of tRNA(Thr). Also edits incorrectly charged L-seryl-tRNA(Thr). The chain is Threonine--tRNA ligase from Klebsiella pneumoniae (strain 342).